Reading from the N-terminus, the 612-residue chain is Bifunctional lycopene cyclase/phytoene synthase (612 aa).

The interval methionine 1–asparagine 268 is lycopene beta-cyclase. A run of 7 helical transmembrane segments spans residues tryptophan 3–valine 23, leucine 31–leucine 51, leucine 112–serine 130, isoleucine 148–glycine 168, glycine 171–isoleucine 191, asparagine 203–leucine 223, and isoleucine 246–cysteine 266. The phytoene synthase stretch occupies residues threonine 275–lysine 612.

In the N-terminal section; belongs to the lycopene beta-cyclase family. It in the C-terminal section; belongs to the phytoene/squalene synthase family.

The protein localises to the membrane. The catalysed reaction is all-trans-lycopene = gamma-carotene. The enzyme catalyses gamma-carotene = all-trans-beta-carotene. It catalyses the reaction 2 (2E,6E,10E)-geranylgeranyl diphosphate = 15-cis-phytoene + 2 diphosphate. It participates in carotenoid biosynthesis; beta-carotene biosynthesis. Its pathway is carotenoid biosynthesis; phytoene biosynthesis; all-trans-phytoene from geranylgeranyl diphosphate: step 1/1. In terms of biological role, bifunctional enzyme; part of the car gene cluster that mediates the biosynthesis of neurosporaxanthin, a carboxylic apocarotenoid acting as an essential protective pigments and leading to orange pigmentation. CarAR catalyzes the first step of the pathway by converting geranylgeranyl diphosphate to phytoene, as well as the later cyclization step that transforms the carB product lycopene into gamma-carotene. CarAR also converts part of gamma-carotene into beta-carotene. Neurosporaxanthin is synthesized from geranyl-geranyl pyrophosphate (GGPP) through several enzymatic activities. Phytoene synthase activity performed by the bifunctional enzyme carAR first produces phytoene from geranyl-geranyl pyrophosphate (GGPP). The phytoene dehydrogenase carB then introduces 4 desaturations to lead to lycopene which is substrate of the carotene cyclase activity of carAR that leads to the production of gamma-carotene. CarB then performs a 5th desaturation reaction to yield torulene. Torulene is the substrate of the dioxidase carT that breaks the molecule, removing five carbon atoms to yield beta-apo-4'-carotenal, whereas the aldehyde dehydrogenase carD mediates the last step by converting beta-apo-4'-carotenal into neurosporaxanthin. The protein is Bifunctional lycopene cyclase/phytoene synthase of Fusarium fujikuroi (Bakanae and foot rot disease fungus).